A 156-amino-acid chain; its full sequence is Small ribosomal subunit protein uS7 (156 aa).

The protein belongs to the universal ribosomal protein uS7 family. In terms of assembly, part of the 30S ribosomal subunit. Contacts proteins S9 and S11.

In terms of biological role, one of the primary rRNA binding proteins, it binds directly to 16S rRNA where it nucleates assembly of the head domain of the 30S subunit. Is located at the subunit interface close to the decoding center, probably blocks exit of the E-site tRNA. This Klebsiella pneumoniae (strain 342) protein is Small ribosomal subunit protein uS7.